Here is a 502-residue protein sequence, read N- to C-terminus: MELITLLSALLVLAIVSLSTFFVLYYNTPTKDGKTLPPGRMGWPFIGESYDFFAAGWKGKPESFIFDRLKKFAKGNLNGQFRTSLFGNKSIVVAGAAANKLLFSNEKKLVTMWWPPSIDKAFPSTAQLSANEEALLMRKFFPSFLIRREALQRYIPIMDDCTRRHFATGAWGPSDKIEAFNVTQDYTFWVACRVFMSIDAQEDPETVDSLFRHFNVLKAGIYSMHIDLPWTNFHHAMKASHAIRSAVEQIAKKRRAELAEGKAFPTQDMLSYMLETPITSAEDSKDGKAKYLNDADIGTKILGLLVGGHDTSSTVIAFFFKFMAENPHVYEAIYKEQMEVAATKAPGELLNWDDLQKMKYSWCAICEVMRLTPPVQGAFRQAITDFTHNGYLIPKGWKIYWSTHSTHRNPEIFPQPEKFDPTRFEGNGPPAFSFVPFGGGPRMCPGKEYARLQVLTFVHHIVTKFKWEQILPNEKIIVSPMPYPEKNLPLRMIARSESATLA.

A helical; Signal-anchor for type II membrane protein transmembrane segment spans residues 3-23 (LITLLSALLVLAIVSLSTFFV). Residues asparagine 88 and asparagine 181 are each glycosylated (N-linked (GlcNAc...) asparagine). Cysteine 444 provides a ligand contact to heme.

It belongs to the cytochrome P450 family. Heme serves as cofactor. Mainly expressed in flowers and flower buds, to a lesser extent in young leaves and, at low levels, in old leaves, stems and roots.

It is found in the membrane. The catalysed reaction is beta-amyrin + 3 reduced [NADPH--hemoprotein reductase] + 3 O2 = oleanolate + 3 oxidized [NADPH--hemoprotein reductase] + 4 H2O + 4 H(+). The protein operates within secondary metabolite biosynthesis; terpenoid biosynthesis. Component of the oleanane-type triterpene saponins (e.g. saponarioside A and saponarioside B) biosynthetic pathway, leading to the production of natural products with detergent properties used as traditional sources of soap. An oxidoreductase that facilitates the oxidation of the methyl group to a carboxyl group at the C-28 position of beta-amyrin, resulting in the formation of oleanolic acid. Catalyzes also the subsequent oxidation of the methyl group to a&lt; carboxyl group at the C-16 alpha position of oleanolic acid, resulting in the formation of echinocystic acid. The polypeptide is Beta-amyrin 28-monooxygenase CYP716A379 (Saponaria officinalis (Common soapwort)).